The sequence spans 300 residues: uncharacterized protein (300 aa).

Positions 1–19 (MKLKLLLIPLLGSSLLLSA) are cleaved as a signal peptide. Residue C20 is the site of N-palmitoyl cysteine attachment. Residue C20 is the site of S-diacylglycerol cysteine attachment.

This sequence belongs to the MG439/MG440 family.

Its subcellular location is the cell membrane. This is an uncharacterized protein from Mycoplasma pneumoniae (strain ATCC 29342 / M129 / Subtype 1) (Mycoplasmoides pneumoniae).